Here is a 475-residue protein sequence, read N- to C-terminus: Glutamate--tRNA ligase (475 aa).

The short motif at 11-21 (PSPTGFLHIGG) is the 'HIGH' region element. The 'KMSKS' region signature appears at 240–244 (KLSKR). Lys243 is an ATP binding site.

Belongs to the class-I aminoacyl-tRNA synthetase family. Glutamate--tRNA ligase type 1 subfamily. As to quaternary structure, monomer.

Its subcellular location is the cytoplasm. It catalyses the reaction tRNA(Glu) + L-glutamate + ATP = L-glutamyl-tRNA(Glu) + AMP + diphosphate. Its function is as follows. Catalyzes the attachment of glutamate to tRNA(Glu) in a two-step reaction: glutamate is first activated by ATP to form Glu-AMP and then transferred to the acceptor end of tRNA(Glu). This Bradyrhizobium diazoefficiens (strain JCM 10833 / BCRC 13528 / IAM 13628 / NBRC 14792 / USDA 110) protein is Glutamate--tRNA ligase.